The sequence spans 369 residues: Queuine tRNA-ribosyltransferase (369 aa).

Aspartate 89 acts as the Proton acceptor in catalysis. Substrate contacts are provided by residues 89 to 93 (DSGGF), aspartate 143, glutamine 187, and glycine 214. An RNA binding region spans residues 245 to 251 (GVGTPED). Aspartate 264 serves as the catalytic Nucleophile. Residues 269 to 273 (TRNAR) form an RNA binding; important for wobble base 34 recognition region. Zn(2+) is bound by residues cysteine 302, cysteine 304, cysteine 307, and histidine 333.

This sequence belongs to the queuine tRNA-ribosyltransferase family. As to quaternary structure, homodimer. Within each dimer, one monomer is responsible for RNA recognition and catalysis, while the other monomer binds to the replacement base PreQ1. Requires Zn(2+) as cofactor.

The enzyme catalyses 7-aminomethyl-7-carbaguanine + guanosine(34) in tRNA = 7-aminomethyl-7-carbaguanosine(34) in tRNA + guanine. It participates in tRNA modification; tRNA-queuosine biosynthesis. In terms of biological role, catalyzes the base-exchange of a guanine (G) residue with the queuine precursor 7-aminomethyl-7-deazaguanine (PreQ1) at position 34 (anticodon wobble position) in tRNAs with GU(N) anticodons (tRNA-Asp, -Asn, -His and -Tyr). Catalysis occurs through a double-displacement mechanism. The nucleophile active site attacks the C1' of nucleotide 34 to detach the guanine base from the RNA, forming a covalent enzyme-RNA intermediate. The proton acceptor active site deprotonates the incoming PreQ1, allowing a nucleophilic attack on the C1' of the ribose to form the product. After dissociation, two additional enzymatic reactions on the tRNA convert PreQ1 to queuine (Q), resulting in the hypermodified nucleoside queuosine (7-(((4,5-cis-dihydroxy-2-cyclopenten-1-yl)amino)methyl)-7-deazaguanosine). This chain is Queuine tRNA-ribosyltransferase, found in Dechloromonas aromatica (strain RCB).